The primary structure comprises 251 residues: Probable phosphatase Sputw3181_2734 (251 aa).

9 residues coordinate Zn(2+): His8, His10, His16, His41, Glu74, His102, His132, Asp193, and His195.

This sequence belongs to the PHP family. Zn(2+) serves as cofactor.

This is Probable phosphatase Sputw3181_2734 from Shewanella sp. (strain W3-18-1).